Reading from the N-terminus, the 501-residue chain is Cytochrome P450 71B23 (501 aa).

A helical transmembrane segment spans residues 1–21; sequence MSIFLCFLLLLLLLLVTIIFT. Heme is bound at residue cysteine 443.

It belongs to the cytochrome P450 family. The cofactor is heme.

Its subcellular location is the membrane. This chain is Cytochrome P450 71B23 (CYP71B23), found in Arabidopsis thaliana (Mouse-ear cress).